The sequence spans 99 residues: MKFSQNILRHELVGLNLEIVNSTDKRLISTKGRVINETRNMLVIEKNNGKEITVPKEISIFRFEFSDLDTPKKVDIDGRLLIGRPEDRLKRKIKQLYPY.

It belongs to the eukaryotic/archaeal RNase P protein component 1 family. In terms of assembly, consists of a catalytic RNA component and at least 4-5 protein subunits.

Its subcellular location is the cytoplasm. It carries out the reaction Endonucleolytic cleavage of RNA, removing 5'-extranucleotides from tRNA precursor.. Functionally, part of ribonuclease P, a protein complex that generates mature tRNA molecules by cleaving their 5'-ends. The chain is Ribonuclease P protein component 1 from Methanococcus vannielii.